The primary structure comprises 157 residues: 2-C-methyl-D-erythritol 2,4-cyclodiphosphate synthase (157 aa).

Residues D8 and H10 each coordinate a divalent metal cation. Residues 8 to 10 (DVH) and 34 to 35 (HS) each bind 4-CDP-2-C-methyl-D-erythritol 2-phosphate. A divalent metal cation is bound at residue H42. Residues 56-58 (DIG), 61-65 (FPDTD), 100-106 (AQAPKMA), 132-135 (TTTE), F139, and R142 contribute to the 4-CDP-2-C-methyl-D-erythritol 2-phosphate site.

Belongs to the IspF family. As to quaternary structure, homotrimer. A divalent metal cation serves as cofactor.

The enzyme catalyses 4-CDP-2-C-methyl-D-erythritol 2-phosphate = 2-C-methyl-D-erythritol 2,4-cyclic diphosphate + CMP. It functions in the pathway isoprenoid biosynthesis; isopentenyl diphosphate biosynthesis via DXP pathway; isopentenyl diphosphate from 1-deoxy-D-xylulose 5-phosphate: step 4/6. Functionally, involved in the biosynthesis of isopentenyl diphosphate (IPP) and dimethylallyl diphosphate (DMAPP), two major building blocks of isoprenoid compounds. Catalyzes the conversion of 4-diphosphocytidyl-2-C-methyl-D-erythritol 2-phosphate (CDP-ME2P) to 2-C-methyl-D-erythritol 2,4-cyclodiphosphate (ME-CPP) with a corresponding release of cytidine 5-monophosphate (CMP). This is 2-C-methyl-D-erythritol 2,4-cyclodiphosphate synthase from Serratia proteamaculans (strain 568).